The primary structure comprises 176 residues: Avian agnoprotein 1a (176 aa).

2 disordered regions span residues 1 to 85 and 116 to 176; these read MSTP…GKLE and VYAA…RPAR. A compositionally biased stretch (basic and acidic residues) spans 75-85; sequence YDRQNRFGKLE. Positions 76–119 form a coiled coil; sequence DRQNRFGKLESEIRETKSQLETLRQELKHLQADVDDLKETVYAA. A compositionally biased stretch (low complexity) spans 137-161; it reads TPTATTPEASPAAPTTESTETTGPS.

As to quaternary structure, interacts with VP1.

The protein localises to the virion. It is found in the host nucleus. The chain is Avian agnoprotein 1a from Budgerigar fledgling disease virus (BFPyV).